Here is a 935-residue protein sequence, read N- to C-terminus: MISAPDVVAFTKEDEYEEEPYNEPALPEEYSVPLFPYASQGANPWSKLSGAKFSRDFILISEFSEQVGPQPLLTIPNDTKVFGTFDLNYFSLRIMSVDYQASFVGHPPGSAYPKLNFVEDSKVVLGDSKEGAFAYVHHLTLYDLEARGFVRPFCMAYISADQHKIMQQFQELSAEFSKASECLKMGNRKAFAGELEKKLKDLDYTRTVLHTETEIQKKANDKGFYSSQAIEKANELANVEKSIIEHQDLLRQIRSYPRQKTKIPDLQPGDTEHTQDQADQVSTTSNPEESANADLYTCRPAYTPKLIKAKSTKCFDKKLKTLEELCDTEYFTQTLAQLSHIEHMFRGDLCYLLTSQIDRVLRKQQPITNFLFEDFVEVDDRMEKQENVPSQPSQDRLPPKPVEECPIPKVLISVGSYKSSVESVLIKMEQELGDEEYTGVEATEARSFDPQENLDYLDMDMKGSISSGESIEVLGTEKSASVLSKSDSQASLTVPLSPHVVRSKAVSHRTISEDSIEVLSTCPSEALIPDDFKASYPSAINEEEAYADNEGAIHFQASAGSPEPDETQEGNLENIPSQIDSSCCIGKESEGHLVPLPTPAYTLSDEDSVVSIPPQRYIQKDQGLHVDFGVENTDPSPRDNSCEMFPAYELDPSCLLASRDVSKMSLDNYSDTTSYMGSAASTSSDRIPSAPPAGLSSERHKKRAGQNALKFIRQYPFAHPAIYSLLSGRTLVVLGEDETIVRKLVTALSIFVPNYGCYAKPVKHWISSPLHIMDFQKWKLIGLQRVASPANVGTLHTLSRYSRYTSILDLDSKTLRCPLYRGTLVPRLADHRTQIKRGSTYYLHVQSMLTQLCSKAFLYTFCHHLHLPAHSEETQEAVASRQTSFLKLNLGLVNEDIRVVQYLAELLKLHYMQESPGTTHPLLRFDYVPSFLYKI.

The interval M1–L349 is required for the homodimerization of the C9orf72-SMCR8 complex. One can recognise a uDENN FLCN/SMCR8-type domain in the interval L48 to N220. Disordered stretches follow at residues P257–A291 and E383–V402. Over residues Q277–E289 the composition is skewed to polar residues. In terms of domain architecture, cDENN FLCN/SMCR8-type spans K318 to T833. A phosphoserine mark is found at S416, S467, S470, S488, S491, and S497. Over residues G677–R686 the composition is skewed to polar residues. The tract at residues G677–R699 is disordered. Phosphoserine is present on S788. The residue at position 794 (T794) is a Phosphothreonine; by TBK1. The dDENN FLCN/SMCR8-type domain occupies Y842–K908. The tract at residues T860 to M912 is interacts with WDR41 within the C9orf72-SMCR8 complex.

The protein belongs to the SMCR8 family. Component of the C9orf72-SMCR8 complex, at least composed of C9orf72, SMCR8 and WDR41. The complex is formed of two protomers, each individually consisting of one molecule each of C9orf72, SMCR8 and WDR41. The protomers homodimerize via an interaction between C9orf72 (via C-terminus) and SMCR8 (via N-terminus). Within each protomer SMCR8 (via DENN domain) acts as a bridging protein between WDR41 (via C-terminus and N-terminus) and C9orf72 (via C-terminus). The C9orf72-SMCR8 complex associates with the ULK1/ATG1 kinase complex. Interacts with C9orf72; the interaction is direct. Interacts with DLG4/PSD-95. Post-translationally, phosphorylation by TBK1 is required to promote autophagosome maturation. Phosphorylated by ULK1. Widely expressed. Expressed in the forebrain and hippocampus (at protein level).

Its subcellular location is the cytoplasm. The protein resides in the nucleus. It localises to the presynapse. The protein localises to the postsynapse. Component of the C9orf72-SMCR8 complex, a complex that has guanine nucleotide exchange factor (GEF) activity and regulates autophagy. In the complex, C9orf72 and SMCR8 probably constitute the catalytic subunits that promote the exchange of GDP to GTP, converting inactive GDP-bound RAB8A and RAB39B into their active GTP-bound form, thereby promoting autophagosome maturation. The C9orf72-SMCR8 complex also acts as a negative regulator of autophagy initiation by interacting with the ULK1/ATG1 kinase complex and inhibiting its protein kinase activity. As part of the C9orf72-SMCR8 complex, stimulates RAB8A and RAB11A GTPase activity in vitro. Acts as a regulator of mTORC1 signaling by promoting phosphorylation of mTORC1 substrates. In addition to its activity in the cytoplasm within the C9orf72-SMCR8 complex, SMCR8 also localizes in the nucleus, where it associates with chromatin and negatively regulates expression of suppresses ULK1 and WIPI2 genes. The protein is Guanine nucleotide exchange protein SMCR8 (Smcr8) of Mus musculus (Mouse).